Reading from the N-terminus, the 685-residue chain is Sodium-dependent phosphate transporter 1-B (685 aa).

6 helical membrane passes run 21–41 (IMAPYLWMLVLGFVIAFVLAF), 66–86 (ACILASIFETVGSVLLGAKVS), 106–126 (LMAGSISAMFGSAVWQLAASF), 162–182 (IVLSWFISPLLSGIMSALLFF), 207–227 (ACTIGINLFSIMYTGAPLLGF), and 234–254 (GIILISVGCAVFCALFVWFFV). Positions 489-511 (EGCIEDVVTDRKSSSSSLEERHD) are disordered. The segment covering 496-511 (VTDRKSSSSSLEERHD) has biased composition (basic and acidic residues). A run of 4 helical transmembrane segments spans residues 517-537 (VSLLFQFLQILTACFGSFAHG), 565-585 (ATPIWLLLYGGIGICIGLWVW), 606-626 (FSIELASALTVVIASNVGLPI), and 656-676 (IFLAWFVTVPISGLISAGIMA).

It belongs to the inorganic phosphate transporter (PiT) (TC 2.A.20) family.

The protein resides in the membrane. Functionally, sodium-phosphate symporter which plays a fundamental housekeeping role in phosphate transport. In Xenopus laevis (African clawed frog), this protein is Sodium-dependent phosphate transporter 1-B (slc20a1-b).